Here is a 69-residue protein sequence, read N- to C-terminus: Cytochrome c oxidase subunit 8A, mitochondrial (69 aa).

A mitochondrion-targeting transit peptide spans 1–25 (MSVLTPLLLRSLTGSARRLMVPRAQ). The SIFI-degron signature appears at 2–19 (SVLTPLLLRSLTGSARRL). At 26–36 (VHSKPAREQLG) the chain is on the mitochondrial matrix side. A helical membrane pass occupies residues 37–60 (VLDITIGLTSCFVCCLLPAGWVLS). The Mitochondrial intermembrane portion of the chain corresponds to 61–69 (HLESYKKRE).

This sequence belongs to the cytochrome c oxidase VIII family. As to quaternary structure, component of the cytochrome c oxidase (complex IV, CIV), a multisubunit enzyme composed of 14 subunits. The complex is composed of a catalytic core of 3 subunits MT-CO1, MT-CO2 and MT-CO3, encoded in the mitochondrial DNA, and 11 supernumerary subunits COX4I, COX5A, COX5B, COX6A, COX6B, COX6C, COX7A, COX7B, COX7C, COX8 and NDUFA4, which are encoded in the nuclear genome. The complex exists as a monomer or a dimer and forms supercomplexes (SCs) in the inner mitochondrial membrane with NADH-ubiquinone oxidoreductase (complex I, CI) and ubiquinol-cytochrome c oxidoreductase (cytochrome b-c1 complex, complex III, CIII), resulting in different assemblies (supercomplex SCI(1)III(2)IV(1) and megacomplex MCI(2)III(2)IV(2)). In terms of processing, in response to mitochondrial stress, the precursor protein is ubiquitinated by the SIFI complex in the cytoplasm before mitochondrial import, leading to its degradation. Within the SIFI complex, UBR4 initiates ubiquitin chain that are further elongated or branched by KCMF1.

Its subcellular location is the mitochondrion inner membrane. It participates in energy metabolism; oxidative phosphorylation. In terms of biological role, component of the cytochrome c oxidase, the last enzyme in the mitochondrial electron transport chain which drives oxidative phosphorylation. The respiratory chain contains 3 multisubunit complexes succinate dehydrogenase (complex II, CII), ubiquinol-cytochrome c oxidoreductase (cytochrome b-c1 complex, complex III, CIII) and cytochrome c oxidase (complex IV, CIV), that cooperate to transfer electrons derived from NADH and succinate to molecular oxygen, creating an electrochemical gradient over the inner membrane that drives transmembrane transport and the ATP synthase. Cytochrome c oxidase is the component of the respiratory chain that catalyzes the reduction of oxygen to water. Electrons originating from reduced cytochrome c in the intermembrane space (IMS) are transferred via the dinuclear copper A center (CU(A)) of subunit 2 and heme A of subunit 1 to the active site in subunit 1, a binuclear center (BNC) formed by heme A3 and copper B (CU(B)). The BNC reduces molecular oxygen to 2 water molecules using 4 electrons from cytochrome c in the IMS and 4 protons from the mitochondrial matrix. This chain is Cytochrome c oxidase subunit 8A, mitochondrial (Cox8a), found in Mus musculus (Mouse).